A 177-amino-acid polypeptide reads, in one-letter code: Large ribosomal subunit protein uL6 (177 aa).

It belongs to the universal ribosomal protein uL6 family. In terms of assembly, part of the 50S ribosomal subunit.

This protein binds to the 23S rRNA, and is important in its secondary structure. It is located near the subunit interface in the base of the L7/L12 stalk, and near the tRNA binding site of the peptidyltransferase center. This is Large ribosomal subunit protein uL6 from Yersinia enterocolitica serotype O:8 / biotype 1B (strain NCTC 13174 / 8081).